A 298-amino-acid chain; its full sequence is Acidic endochitinase (298 aa).

Positions 1 to 29 are cleaved as a signal peptide; the sequence is MKPNMACLKQVSALLLPLLFISFFKPSHA. In terms of domain architecture, GH18 spans 30–298; it reads GGISVYWGQN…GYSGAIIGSV (269 aa). Intrachain disulfides connect C49-C96 and C79-C86. E156 acts as the Proton donor in catalysis. C185 and C214 are disulfide-bonded.

The protein belongs to the glycosyl hydrolase 18 family. Chitinase class II subfamily.

It is found in the secreted. It localises to the extracellular space. The catalysed reaction is Random endo-hydrolysis of N-acetyl-beta-D-glucosaminide (1-&gt;4)-beta-linkages in chitin and chitodextrins.. This protein functions as a defense against chitin containing fungal pathogens. The chain is Acidic endochitinase from Phaseolus angularis (Azuki bean).